A 218-amino-acid polypeptide reads, in one-letter code: ETS domain-containing protein ets-7 (218 aa).

The ETS DNA-binding region spans 12–93 (QRLLNFLRGL…KGKDSRYCFL (82 aa)). Residues 131-161 (TSNFSLQSSPSSSSNSSSARTMSATSSPTSS) show a composition bias toward low complexity. The disordered stretch occupies residues 131–162 (TSNFSLQSSPSSSSNSSSARTMSATSSPTSSL).

Belongs to the ETS family.

It is found in the nucleus. Functionally, probable transcription factor. Involved in responses to oxidative stress. The polypeptide is ETS domain-containing protein ets-7 (Caenorhabditis elegans).